We begin with the raw amino-acid sequence, 79 residues long: Probable 26S proteasome complex subunit sem1 (79 aa).

Over residues methionine 1–aspartate 21 the composition is skewed to basic and acidic residues. Residues methionine 1–glutamate 30 are disordered. Serine 19 is subject to Phosphoserine.

Belongs to the DSS1/SEM1 family. Part of the 26S proteasome.

Its function is as follows. Subunit of the 26S proteasome which plays a role in ubiquitin-dependent proteolysis. The chain is Probable 26S proteasome complex subunit sem1 from Drosophila melanogaster (Fruit fly).